Reading from the N-terminus, the 153-residue chain is Xanthine-guanine phosphoribosyltransferase (153 aa).

Residues 37-38 (RG) and 89-97 (DDLVDTGNT) contribute to the 5-phospho-alpha-D-ribose 1-diphosphate site. Asp90 serves as a coordination point for Mg(2+). Guanine contacts are provided by Asp93 and Ile136. Xanthine contacts are provided by Asp93 and Ile136. GMP contacts are provided by residues 93–97 (DTGNT) and 135–136 (WI).

The protein belongs to the purine/pyrimidine phosphoribosyltransferase family. XGPT subfamily. As to quaternary structure, homotetramer. Mg(2+) serves as cofactor.

It localises to the cell inner membrane. It carries out the reaction GMP + diphosphate = guanine + 5-phospho-alpha-D-ribose 1-diphosphate. The catalysed reaction is XMP + diphosphate = xanthine + 5-phospho-alpha-D-ribose 1-diphosphate. It catalyses the reaction IMP + diphosphate = hypoxanthine + 5-phospho-alpha-D-ribose 1-diphosphate. It functions in the pathway purine metabolism; GMP biosynthesis via salvage pathway; GMP from guanine: step 1/1. It participates in purine metabolism; XMP biosynthesis via salvage pathway; XMP from xanthine: step 1/1. Functionally, purine salvage pathway enzyme that catalyzes the transfer of the ribosyl-5-phosphate group from 5-phospho-alpha-D-ribose 1-diphosphate (PRPP) to the N9 position of the 6-oxopurines guanine and xanthine to form the corresponding ribonucleotides GMP (guanosine 5'-monophosphate) and XMP (xanthosine 5'-monophosphate), with the release of PPi. To a lesser extent, also acts on hypoxanthine. The protein is Xanthine-guanine phosphoribosyltransferase of Pasteurella multocida (strain Pm70).